Here is a 420-residue protein sequence, read N- to C-terminus: Probable endo-beta-1,4-glucanase celB (420 aa).

Positions 1-18 (MLRKLTPLALALLPLVAG) are cleaved as a signal peptide. The N-linked (GlcNAc...) asparagine glycan is linked to Asn118. The active-site Nucleophile is the Glu215. Glu220 acts as the Proton donor in catalysis. 3 N-linked (GlcNAc...) asparagine glycosylation sites follow: Asn234, Asn293, and Asn383.

Belongs to the glycosyl hydrolase 7 (cellulase C) family.

It is found in the secreted. It carries out the reaction Endohydrolysis of (1-&gt;4)-beta-D-glucosidic linkages in cellulose, lichenin and cereal beta-D-glucans.. Functionally, has endoglucanase activity on substrates containing beta-1,4 glycosidic bonds, like in carboxymethylcellulose (CMC), hydroxyethylcellulose (HEC) and beta-glucan. Involved in the degradation of complex natural cellulosic substrates. The protein is Probable endo-beta-1,4-glucanase celB (celB) of Aspergillus terreus (strain NIH 2624 / FGSC A1156).